Reading from the N-terminus, the 415-residue chain is L-cysteine:1D-myo-inositol 2-amino-2-deoxy-alpha-D-glucopyranoside ligase (415 aa).

The tract at residues Met-1 to Arg-20 is disordered. Cys-43 lines the Zn(2+) pocket. L-cysteinyl-5'-AMP is bound by residues Cys-43–Thr-46, Thr-58, and Asn-81–Thr-83. Positions Ile-45 to His-55 match the 'HIGH' region motif. Positions Glu-187–Pro-192 match the 'ERGGDP' region motif. Trp-227 serves as a coordination point for L-cysteinyl-5'-AMP. Cys-231 contributes to the Zn(2+) binding site. L-cysteinyl-5'-AMP is bound at residue Gly-249–Asp-251. Residue His-256 participates in Zn(2+) binding. Position 283 (Ile-283) interacts with L-cysteinyl-5'-AMP. The short motif at Lys-289–Ser-293 is the 'KMSKS' region element.

The protein belongs to the class-I aminoacyl-tRNA synthetase family. MshC subfamily. In terms of assembly, monomer. Requires Zn(2+) as cofactor.

The enzyme catalyses 1D-myo-inositol 2-amino-2-deoxy-alpha-D-glucopyranoside + L-cysteine + ATP = 1D-myo-inositol 2-(L-cysteinylamino)-2-deoxy-alpha-D-glucopyranoside + AMP + diphosphate + H(+). In terms of biological role, catalyzes the ATP-dependent condensation of GlcN-Ins and L-cysteine to form L-Cys-GlcN-Ins. In Rhodococcus jostii (strain RHA1), this protein is L-cysteine:1D-myo-inositol 2-amino-2-deoxy-alpha-D-glucopyranoside ligase.